The sequence spans 352 residues: MDLMEKNLELVEIQKLEGHTDRVWSVAWNPVSSHADGVSPILASCSGDNTVRIWEQSSLSRSWTCKTVLEETHTRTVRSCAWSPSGQLLATASFDGTTGIWKNYGSEFECISTLEGHENEVKSVSWNASGSCLATCSRDKSVWIWEVLEGNEYDCAAVLTGHTQDVKMVQWHPTMDVLFSCSYDNTIKVWWSEDDDGEYQCVQTLGESNNGHSSTVWSISFNAAGDKMVTCSDDLTLKIWGTDIAKMQSGEEYAPWIHLCTLSGYHDRTIYSAHWSRDDIIASGAGDNAIRLFVDSKHDSVDGPSYNLLLKKNKAHENDVNSVQWSPGEGNRLLASASDDGMVKIWQLATKP.

WD repeat units follow at residues 18–64 (GHTD…RSWT), 72–111 (THTR…FECI), 116–155 (GHEN…EYDC), 161–200 (GHTQ…GEYQ), 211–250 (GHSS…MQSG), 265–303 (YHDR…SVDG), and 315–352 (AHEN…ATKP).

Belongs to the WD repeat CIA1 family. As to quaternary structure, part of a complex composed of AE7, CIA1, MMS19 and NAR1. Interacts with AE7 and NAR1.

The protein resides in the nucleus. It localises to the cytoplasm. In terms of biological role, essential component of the cytosolic iron-sulfur (Fe-S) protein assembly (CIA) machinery. Required for the maturation of extramitochondrial Fe/S proteins. The chain is Protein CIA1 from Arabidopsis thaliana (Mouse-ear cress).